Consider the following 186-residue polypeptide: Ribosome-recycling factor (186 aa).

It belongs to the RRF family.

The protein localises to the cytoplasm. In terms of biological role, responsible for the release of ribosomes from messenger RNA at the termination of protein biosynthesis. May increase the efficiency of translation by recycling ribosomes from one round of translation to another. This Bartonella tribocorum (strain CIP 105476 / IBS 506) protein is Ribosome-recycling factor.